The primary structure comprises 585 residues: Conglutin alpha 3 (585 aa).

The N-terminal stretch at 1–23 (MANPFLLSLSLCLVLLYTSACLG) is a signal peptide. 2 disulfide bridges follow: C32–C65 and C108–C406. The 222-residue stretch at 37–258 (LNALEPDNRI…ALNIDEDTVH (222 aa)) folds into the Cupin type-1 1 domain. 3 disordered regions span residues 113–147 (EEAQ…HFRE), 199–240 (EEYP…ILSG), and 283–402 (KWQE…NGLE). Positions 136-147 (EDSHQKIRHFRE) are enriched in basic and acidic residues. Positions 211–224 (RQQHQRPSGRRHGQ) are enriched in basic residues. A compositionally biased stretch (acidic residues) spans 309–320 (REEEEKEEEDEP). The span at 338–350 (ERGRGRGGSEWKR) shows a compositional bias: basic and acidic residues. Residues 412-558 (ENIADPTRAD…AFRLSLNQVS (147 aa)) enclose the Cupin type-1 2 domain. The segment covering 565–579 (NHNPLVTPQSQSQDH) has biased composition (polar residues). The segment at 565 to 585 (NHNPLVTPQSQSQDHNLVKVA) is disordered.

Belongs to the 11S seed storage protein (globulins) family. As to quaternary structure, hexamer; each subunit is composed of an acidic and a basic chain derived from a single precursor and linked by a disulfide bond. Component of globulins complexes which accumulate in seeds.

Functionally, sulfur-rich seed storage protein. This protein found in the seeds of many leguminous and non-leguminous plants is the source of sulfur-containing amino acids in seed meals. The protein is Conglutin alpha 3 of Lupinus angustifolius (Narrow-leaved blue lupine).